The sequence spans 602 residues: T-cell surface protein tactile (602 aa).

An N-terminal signal peptide occupies residues 1–21 (MGRKWTYCVVYTIIQIQFFRG). Residues 22 to 536 (VWEELFNVGD…IIVNQPSDGM (515 aa)) are Extracellular-facing. Ig-like V-type domains lie at 24 to 134 (EELF…VYNL) and 138 to 244 (PYTQ…STTV). 16 N-linked (GlcNAc...) asparagine glycosylation sites follow: asparagine 42, asparagine 100, asparagine 107, asparagine 145, asparagine 153, asparagine 163, asparagine 195, asparagine 196, asparagine 258, asparagine 281, asparagine 306, asparagine 330, asparagine 348, asparagine 415, asparagine 436, and asparagine 514. The cysteines at positions 45 and 118 are disulfide-linked. Cysteine 160 and cysteine 228 are disulfide-bonded. In terms of domain architecture, Ig-like C2-type spans 250–355 (PEILMTVENS…MWNTSSQPIT (106 aa)). An intrachain disulfide couples cysteine 271 to cysteine 335. The segment at 402–478 (ENGLTPDATP…PQEPDSPVSW (77 aa)) is disordered. Polar residues predominate over residues 409 to 433 (ATPQTSNSSMTTKDGNYLEASSGTD). The span at 434-448 (AKNSSRAAASSKSGS) shows a compositional bias: low complexity. The helical transmembrane segment at 537–557 (SWPVLVAALLFFCTLLFGLGV) threads the bilayer. Topologically, residues 558–602 (RKWYRYQNEIMERPPPFKPPPPPIKYTYIQEPIGCDLCCHEMEVL) are cytoplasmic.

In terms of assembly, homodimer; disulfide-linked. Interacts with PVR.

The protein resides in the membrane. Functionally, may be involved in adhesive interactions of activated T and NK cells during the late phase of the immune response. Promotes NK cell-target adhesion by interacting with PVR present on target cells. May function at a time after T and NK cells have penetrated the endothelium using integrins and selectins, when they are actively engaging diseased cells and moving within areas of inflammation. The protein is T-cell surface protein tactile (Cd96) of Mus musculus (Mouse).